The primary structure comprises 509 residues: DNA primase DnaG (509 aa).

The region spanning 167-253 (DAIVVVEGRA…CVEDLARHEV (87 aa)) is the Toprim domain. Mg(2+) is bound by residues glutamate 173, aspartate 215, and aspartate 217. Residues 267 to 411 (KQAASDDADP…ASTDEQPKTL (145 aa)) form a disordered region. Low complexity-rich tracts occupy residues 313-331 (PVSS…ETAA) and 383-402 (ESTA…AAGA).

This sequence belongs to the archaeal DnaG primase family. Forms a ternary complex with MCM helicase and DNA. Mg(2+) serves as cofactor.

The catalysed reaction is ssDNA + n NTP = ssDNA/pppN(pN)n-1 hybrid + (n-1) diphosphate.. Functionally, RNA polymerase that catalyzes the synthesis of short RNA molecules used as primers for DNA polymerase during DNA replication. The chain is DNA primase DnaG from Natronomonas pharaonis (strain ATCC 35678 / DSM 2160 / CIP 103997 / JCM 8858 / NBRC 14720 / NCIMB 2260 / Gabara) (Halobacterium pharaonis).